The chain runs to 200 residues: Large ribosomal subunit protein uL4 (200 aa).

The disordered stretch occupies residues 42–65 (TRAQKTRSEVSGGGAKPWRQKGTG).

It belongs to the universal ribosomal protein uL4 family. In terms of assembly, part of the 50S ribosomal subunit.

One of the primary rRNA binding proteins, this protein initially binds near the 5'-end of the 23S rRNA. It is important during the early stages of 50S assembly. It makes multiple contacts with different domains of the 23S rRNA in the assembled 50S subunit and ribosome. Its function is as follows. Forms part of the polypeptide exit tunnel. This Vibrio atlanticus (strain LGP32) (Vibrio splendidus (strain Mel32)) protein is Large ribosomal subunit protein uL4.